The primary structure comprises 158 residues: Class 10 plant pathogenesis-related protein 2A (158 aa).

Residue D8 coordinates trans-zeatin. P32, V35, and I38 together coordinate Ca(2+). Trans-zeatin is bound by residues E60, H69, Y81, and Y83.

This sequence belongs to the BetVI family.

It is found in the cytoplasm. The protein resides in the cytosol. Functionally, class II ribonuclease (RNase). Binds to cytokinins. Interacts with melatonin. This is Class 10 plant pathogenesis-related protein 2A from Lupinus luteus (European yellow lupine).